The sequence spans 1380 residues: DNA-directed RNA polymerase subunit beta (1380 aa).

Belongs to the RNA polymerase beta chain family. In terms of assembly, the RNAP catalytic core consists of 2 alpha, 1 beta, 1 beta' and 1 omega subunit. When a sigma factor is associated with the core the holoenzyme is formed, which can initiate transcription.

It catalyses the reaction RNA(n) + a ribonucleoside 5'-triphosphate = RNA(n+1) + diphosphate. DNA-dependent RNA polymerase catalyzes the transcription of DNA into RNA using the four ribonucleoside triphosphates as substrates. This chain is DNA-directed RNA polymerase subunit beta, found in Alcanivorax borkumensis (strain ATCC 700651 / DSM 11573 / NCIMB 13689 / SK2).